Here is a 112-residue protein sequence, read N- to C-terminus: Notch-regulated ankyrin repeat-containing protein A (112 aa).

ANK repeat units follow at residues 48 to 77 (EGQT…DIRL) and 81 to 110 (EGWS…YSSG).

It belongs to the NRARP family.

Regulates independently canonical Wnt and Notch signaling by modulating LEF1 and Notch protein turnover. Stabilizes LEF1, a pivotal transcription factor in the Wnt signaling cascade, by blocking its ubiquitination. Involved in angiogenesis; involved in intersegmental vessel patterning during development. This Danio rerio (Zebrafish) protein is Notch-regulated ankyrin repeat-containing protein A (nrarpa).